A 176-amino-acid polypeptide reads, in one-letter code: Ribosome rescue factor SmrB (176 aa).

One can recognise a Smr domain in the interval 93 to 168; it reads LDLHGYRQSE…GDAALLVLID (76 aa).

This sequence belongs to the SmrB family. As to quaternary structure, associates with collided ribosomes, but not with correctly translating polysomes.

Acts as a ribosome collision sensor. Detects stalled/collided disomes (pairs of ribosomes where the leading ribosome is stalled and a second ribosome has collided with it) and endonucleolytically cleaves mRNA at the 5' boundary of the stalled ribosome. Stalled/collided disomes form a new interface (primarily via the 30S subunits) that binds SmrB. Cleaved mRNA becomes available for tmRNA ligation, leading to ribosomal subunit dissociation and rescue of stalled ribosomes. This is Ribosome rescue factor SmrB from Shewanella baltica (strain OS195).